Consider the following 71-residue polypeptide: Lantibiotic Flvbeta.c (71 aa).

Residues 1–33 (MENKFDMEKFKKLAAVVSEDELDTLLDETTVGA) constitute a propeptide, cleaved by FlvT. A cross-link (lanthionine (Ser-Cys); by FlvM2) is located at residues 35-39 (SSNDC). The residue at position 36 (Ser36) is a 2,3-didehydroalanine (Ser); by FlvM2. 3 cross-links (beta-methyllanthionine (Thr-Cys); by FlvM2) span residues 54-60 (TSKFDWC), 62-65 (TGAC), and 66-69 (TTSC).

Contains LL-lanthionine and DL-beta-methyllanthionine, when coepressed in E.coli with the flavecin synthetase FlvM2.

The protein resides in the secreted. Functionally, lanthionine-containing peptide antibiotic (lantibiotic) that is probably active on Gram-positive bacteria, since its analog [Del1]Flvbeta.c shows antibacterial activity against M.luteus. This activity is not synergistically enhanced by [Del2]Flvalpha.a, an analog of Flvalpha.a, which is encoded by the same operon than Flvbeta.c. The bactericidal activity of lantibiotics is based on depolarization of energized bacterial cytoplasmic membranes, initiated by the formation of aqueous transmembrane pores. This is Lantibiotic Flvbeta.c from Ruminococcus flavefaciens.